The sequence spans 362 residues: Chorismate synthase (362 aa).

Residues Arg48 and Arg54 each contribute to the NADP(+) site. FMN contacts are provided by residues 125–127 (RSS), 241–242 (NA), Gly286, 301–305 (KPTSS), and Arg327.

Belongs to the chorismate synthase family. In terms of assembly, homotetramer. The cofactor is FMNH2.

The enzyme catalyses 5-O-(1-carboxyvinyl)-3-phosphoshikimate = chorismate + phosphate. It participates in metabolic intermediate biosynthesis; chorismate biosynthesis; chorismate from D-erythrose 4-phosphate and phosphoenolpyruvate: step 7/7. Functionally, catalyzes the anti-1,4-elimination of the C-3 phosphate and the C-6 proR hydrogen from 5-enolpyruvylshikimate-3-phosphate (EPSP) to yield chorismate, which is the branch point compound that serves as the starting substrate for the three terminal pathways of aromatic amino acid biosynthesis. This reaction introduces a second double bond into the aromatic ring system. The sequence is that of Chorismate synthase from Paramagnetospirillum magneticum (strain ATCC 700264 / AMB-1) (Magnetospirillum magneticum).